The sequence spans 386 residues: Caspase-12 (386 aa).

Residues 1 to 91 form the CARD domain; it reads MAGKRQSQDP…LLSLKSHAEN (91 aa). The residue at position 84 (S84) is a Phosphoserine. Active-site residues include H218 and C266.

The protein belongs to the peptidase C14A family. In terms of assembly, heterotetramer that consists of two anti-parallel arranged heterodimers, each one formed by two subunits (Potential). May interact with TRAF2.

Involved in the activation cascade of caspases responsible for apoptosis execution. This chain is Caspase-12, found in Canis lupus familiaris (Dog).